Reading from the N-terminus, the 63-residue chain is Cecropin-B (63 aa).

The signal sequence occupies residues 1–23 (MNFNKIFVFVALILAISLGNSEA). Arginine amide is present on Arg62.

This sequence belongs to the cecropin family. Strongly expressed in larval, pupal and adult fat body and hemocytes after injection of bacteria. Maximal expression is seen in pupae.

The protein localises to the secreted. Functionally, cecropins have lytic and antibacterial activity against several Gram-positive and Gram-negative bacteria. The protein is Cecropin-B (CecB) of Drosophila melanogaster (Fruit fly).